The following is a 164-amino-acid chain: Protein-export protein SecB (164 aa).

Belongs to the SecB family. In terms of assembly, homotetramer, a dimer of dimers. One homotetramer interacts with 1 SecA dimer.

The protein resides in the cytoplasm. Its function is as follows. One of the proteins required for the normal export of preproteins out of the cell cytoplasm. It is a molecular chaperone that binds to a subset of precursor proteins, maintaining them in a translocation-competent state. It also specifically binds to its receptor SecA. In Pseudomonas syringae pv. tomato (strain ATCC BAA-871 / DC3000), this protein is Protein-export protein SecB.